We begin with the raw amino-acid sequence, 578 residues long: Isocitrate dehydrogenase kinase/phosphatase (578 aa).

Residues 315 to 321 and Lys-336 each bind ATP; that span reads APGIRGM. The active site involves Asp-371.

It belongs to the AceK family.

It is found in the cytoplasm. The catalysed reaction is L-seryl-[isocitrate dehydrogenase] + ATP = O-phospho-L-seryl-[isocitrate dehydrogenase] + ADP + H(+). Functionally, bifunctional enzyme which can phosphorylate or dephosphorylate isocitrate dehydrogenase (IDH) on a specific serine residue. This is a regulatory mechanism which enables bacteria to bypass the Krebs cycle via the glyoxylate shunt in response to the source of carbon. When bacteria are grown on glucose, IDH is fully active and unphosphorylated, but when grown on acetate or ethanol, the activity of IDH declines drastically concomitant with its phosphorylation. This Shigella boydii serotype 18 (strain CDC 3083-94 / BS512) protein is Isocitrate dehydrogenase kinase/phosphatase.